A 156-amino-acid polypeptide reads, in one-letter code: MRCPSCQFNGTRVVDSRPVDDNKEIRRRRECESCGFRFTTFEKIEETPLVVVKKEGSREEFSREKVLRGLIRACEKRPVALDILEQLVLSIEKDLRRIGNSEVRSEDVGELVMDRLAKIDEVAYVRFASVYRQFKDINVFIEEIKDIIQRQTEQKS.

A zinc finger spans residues 3 to 34 (CPSCQFNGTRVVDSRPVDDNKEIRRRRECESC). An ATP-cone domain is found at 49 to 139 (LVVVKKEGSR…VYRQFKDINV (91 aa)).

The protein belongs to the NrdR family. It depends on Zn(2+) as a cofactor.

Negatively regulates transcription of bacterial ribonucleotide reductase nrd genes and operons by binding to NrdR-boxes. In Lysinibacillus sphaericus (strain C3-41), this protein is Transcriptional repressor NrdR.